The primary structure comprises 482 residues: Peptide chain release factor PrfB2, chloroplastic (482 aa).

Residues 1–21 (MLSLIIRRSRSRFIIHGIKIS) constitute a chloroplast transit peptide.

It belongs to the prokaryotic/mitochondrial release factor family.

Its subcellular location is the plastid. It is found in the chloroplast stroma. In terms of biological role, directs the termination of translation in response to the peptide chain termination codon UGA. Required for the proper translation, stability and normal processing of UGA-containing polycistronic transcripts in chloroplasts. This Arabidopsis thaliana (Mouse-ear cress) protein is Peptide chain release factor PrfB2, chloroplastic.